Here is a 374-residue protein sequence, read N- to C-terminus: Lipopolysaccharide glucosyltransferase WaaG (374 aa).

The UDP-alpha-D-glucose site is built by glycine 15 and aspartate 19. Positions 103–132 (YAEKVAQEKGFLYRLTSRYRHYAAFERATF) are membrane-interacting region. Arginine 173, arginine 208, lysine 209, arginine 261, glutamate 281, alanine 283, glycine 284, isoleucine 285, valine 286, and glutamate 289 together coordinate UDP-alpha-D-glucose.

This sequence belongs to the glycosyltransferase group 1 family. Glycosyltransferase 4 subfamily.

It is found in the cell inner membrane. It functions in the pathway bacterial outer membrane biogenesis; LPS core biosynthesis. Inhibited by divalent metal ions such as Mg(2+), Mn(2+), Ca(2+), Zn(2+), Co(2+), Ni(2+) and Cu(2+). Functionally, glucosyltransferase involved in the biosynthesis of the core oligosaccharide region of lipopolysaccharide (LPS). Catalyzes the addition of the first outer-core glucose from UDP-glucose to the inner-core heptose II. Cannot use other sugar donors, such as UDP-galactose, UDP-glucuronic acid, UDP-galacuronic acid, GDP-mannose, ADP-glucose and GDP-glucose. In the absence of a lipid acceptor, can slowly hydrolyze UDP-glucose. The protein is Lipopolysaccharide glucosyltransferase WaaG of Escherichia coli (strain K12).